A 300-amino-acid chain; its full sequence is GTPase Era (300 aa).

The Era-type G domain maps to 8-176 (RCGYVAIVGR…EGLIAKHLPE (169 aa)). The interval 16 to 23 (GRPNVGKS) is G1. GTP is bound at residue 16-23 (GRPNVGKS). Positions 42–46 (QTTRH) are G2. The segment at 63–66 (DTPG) is G3. Residues 63–67 (DTPGM) and 125–128 (NKTD) contribute to the GTP site. A G4 region spans residues 125–128 (NKTD). The segment at 155-157 (VSA) is G5. A KH type-2 domain is found at 199–283 (VREKIMRQLG…MLNLWVKVKG (85 aa)).

This sequence belongs to the TRAFAC class TrmE-Era-EngA-EngB-Septin-like GTPase superfamily. Era GTPase family. Monomer.

It localises to the cytoplasm. The protein localises to the cell inner membrane. Functionally, an essential GTPase that binds both GDP and GTP, with rapid nucleotide exchange. Plays a role in 16S rRNA processing and 30S ribosomal subunit biogenesis and possibly also in cell cycle regulation and energy metabolism. The sequence is that of GTPase Era from Pseudomonas fluorescens (strain ATCC BAA-477 / NRRL B-23932 / Pf-5).